The chain runs to 809 residues: Ubiquitin carboxyl-terminal hydrolase 1 (809 aa).

Positions Ala-101 to Asp-738 constitute a USP domain. The active-site Nucleophile is the Cys-110. The interval Asn-143–Pro-195 is disordered. Positions Lys-162–Ser-183 are enriched in basic residues. Basic and acidic residues predominate over residues Ser-184–Glu-194. Phosphoserine occurs at positions 530, 531, and 555. The interval Ala-569 to Glu-596 is disordered. A phosphoserine mark is found at Ser-618 and Ser-638. Thr-652 carries the phosphothreonine modification. Phosphoserine occurs at positions 653, 654, and 670. His-697 acts as the Proton acceptor in catalysis. Residues Leu-750 to Asn-809 form a disordered region. Ser-755 carries the phosphoserine modification. Residues Gln-765–Gln-777 are compositionally biased toward basic and acidic residues. The span at Glu-778–Gln-789 shows a compositional bias: acidic residues. The span at Glu-790–Asn-809 shows a compositional bias: basic and acidic residues.

This sequence belongs to the peptidase C19 family.

It carries out the reaction Thiol-dependent hydrolysis of ester, thioester, amide, peptide and isopeptide bonds formed by the C-terminal Gly of ubiquitin (a 76-residue protein attached to proteins as an intracellular targeting signal).. Has an ATP-independent isopeptidase activity, cleaving at the C-terminus of the ubiquitin moiety in natural or engineered linear fusion proteins, irrespective of their size or the presence of an N-terminal extension to ubiquitin. The polypeptide is Ubiquitin carboxyl-terminal hydrolase 1 (UBP1) (Saccharomyces cerevisiae (strain ATCC 204508 / S288c) (Baker's yeast)).